The chain runs to 648 residues: Threonine--tRNA ligase (648 aa).

Positions 1 to 61 constitute a TGS domain; it reads MIKITFPNTS…NENASVKLYK (61 aa). The tract at residues 243-542 is catalytic; sequence DHRRIGKEME…MIEHTGGKFP (300 aa). Zn(2+) is bound by residues Cys338, His389, and His519.

It belongs to the class-II aminoacyl-tRNA synthetase family. In terms of assembly, homodimer. Zn(2+) is required as a cofactor.

The protein localises to the cytoplasm. The enzyme catalyses tRNA(Thr) + L-threonine + ATP = L-threonyl-tRNA(Thr) + AMP + diphosphate + H(+). Its function is as follows. Catalyzes the attachment of threonine to tRNA(Thr) in a two-step reaction: L-threonine is first activated by ATP to form Thr-AMP and then transferred to the acceptor end of tRNA(Thr). Also edits incorrectly charged L-seryl-tRNA(Thr). The chain is Threonine--tRNA ligase from Azobacteroides pseudotrichonymphae genomovar. CFP2.